Reading from the N-terminus, the 1782-residue chain is AF4/FMR2 family member lilli (1782 aa).

Disordered regions lie at residues 42 to 84 (NMED…PSEG), 150 to 313 (ASSS…PPPE), 434 to 515 (MPTP…QQQQ), 605 to 637 (GGSS…NLSR), 691 to 732 (EKLH…QQRY), 768 to 820 (GALP…LQIP), 839 to 891 (KVQP…SNKK), 911 to 1064 (VAAA…AAAS), 1091 to 1126 (AGNS…QHKQ), 1166 to 1234 (LPQS…KQGQ), 1296 to 1327 (ARQH…TPKD), 1386 to 1420 (LKQE…EQLS), 1450 to 1484 (QESA…QQQQ), and 1674 to 1701 (GNTP…GKIV). Positions 54–80 (REKYERQQGIQSDDRETSLFGEPRRLN) are enriched in basic and acidic residues. 2 stretches are compositionally biased toward low complexity: residues 164-180 (QQQQ…QQQQ) and 211-260 (PSSS…MSSP). Positions 435-447 (PTPPKASPTPPAI) are enriched in pro residues. The residue at position 443 (Thr443) is a Phosphothreonine. Residues 450–463 (MKTEKNHSLEKQDS) show a composition bias toward basic and acidic residues. The segment covering 465–475 (LENDLELSESD) has biased composition (acidic residues). Phosphoserine occurs at positions 472 and 474. Composition is skewed to low complexity over residues 484–515 (SAGN…QQQQ) and 609–622 (GSCM…SSSN). Over residues 623–634 (KTPSPTDSNRWN) the composition is skewed to polar residues. Positions 691-701 (EKLHDEPRHVG) are enriched in basic and acidic residues. 2 stretches are compositionally biased toward low complexity: residues 714 to 730 (QQQQ…QQQQ) and 782 to 805 (SDSG…GGSS). The span at 859-869 (PRQKKPRKKKM) shows a compositional bias: basic residues. 2 positions are modified to phosphoserine: Ser878 and Ser879. Residues 920-932 (KKGRGRPRKQAQQ) constitute a DNA-binding region (a.T hook). Residues 929–972 (QAQQQQQQQQQQLQQSGNLSSASASSSQAKGPTLTAAKKPLAKA) show a composition bias toward low complexity. Phosphoserine occurs at positions 949 and 951. Polar residues predominate over residues 973–982 (SVSNSNSTAP). Composition is skewed to low complexity over residues 996 to 1018 (SNSS…TMAA), 1033 to 1064 (SSSS…AAAS), 1105 to 1116 (SVGSSSNSSSSS), and 1174 to 1196 (SSSD…SSSS). Residues 1308–1318 (AQQNGHLSSRS) are compositionally biased toward polar residues. A compositionally biased stretch (polar residues) spans 1450–1460 (QESAANGSPNK). Ser1457 is modified (phosphoserine). Low complexity-rich tracts occupy residues 1461 to 1484 (LQQQ…QQQQ) and 1674 to 1694 (GNTP…SGSN).

The protein belongs to the AF4 family.

It localises to the nucleus. In terms of biological role, has a role in transcriptional regulation. Acts in parallel with the Ras/MAPK and the PI3K/PKB pathways in the control of cell identity and cellular growth. Essential for regulation of the cytoskeleton and cell growth but not for cell proliferation or growth rate. Required specifically for the microtubule-based basal transport of lipid droplets. Plays a partially redundant function downstream of Raf in cell fate specification in the developing eye. Pair-rule protein that regulates embryonic cellularization, gastrulation and segmentation. The polypeptide is AF4/FMR2 family member lilli (Drosophila mojavensis (Fruit fly)).